The primary structure comprises 570 residues: Nucleoprotein (570 aa).

The binding site for the cap structure m7GTP stretch occupies residues 54 to 241; the sequence is MRKDKRNDSD…IDVSKSSINV (188 aa). The tract at residues 342–361 is disordered; the sequence is IDLSQNKQMSPAKPKGAGHG. The Mn(2+) site is built by Asp-390 and Glu-392. Zn(2+) is bound by residues Glu-400, Cys-507, His-510, and Cys-530. Asp-534 lines the Mn(2+) pocket.

The protein belongs to the arenaviridae nucleocapsid protein family. Homomultimerizes to form the nucleocapsid. Binds to viral genomic RNA. Interacts with glycoprotein G2. Interacts with protein Z; this interaction probably directs the encapsidated genome to budding sites. Interacts with protein L; this interaction does not interfere with Z-L interaction. Interacts with host IKBKE (via Protein kinase domain); the interaction inhibits IKBKE kinase activity.

It localises to the virion. Its subcellular location is the host cytoplasm. Functionally, encapsidates the genome, protecting it from nucleases. The encapsidated genomic RNA is termed the nucleocapsid (NC). Serves as template for viral transcription and replication. The increased presence of protein N in host cell does not seem to trigger the switch from transcription to replication as observed in other negative strain RNA viruses. Through the interaction with host IKBKE, strongly inhibits the phosphorylation and nuclear translocation of host IRF3, a protein involved in interferon activation pathway, leading to the inhibition of interferon-beta and IRF3-dependent promoters activation. Also encodes a functional 3'-5' exoribonuclease that degrades preferentially dsRNA substrates and thereby participates in the suppression of interferon induction. This is Nucleoprotein from Praomys (African soft-furred rats).